A 446-amino-acid chain; its full sequence is Adenylosuccinate synthetase 1 (446 aa).

GTP contacts are provided by residues 20–26 (GDEGKGK) and 48–50 (GHT). Asp21 acts as the Proton acceptor in catalysis. Mg(2+)-binding residues include Asp21 and Gly48. Residues 21–24 (DEGK), 46–49 (NAGH), Thr137, Arg151, Gln232, Thr247, and Arg319 contribute to the IMP site. Residue His49 is the Proton donor of the active site. 315 to 321 (SVTGRPR) serves as a coordination point for substrate. GTP is bound by residues Arg321, 347 to 349 (KLD), and 429 to 431 (STG).

It belongs to the adenylosuccinate synthetase family. Homodimer. Mg(2+) is required as a cofactor.

The protein localises to the cytoplasm. It carries out the reaction IMP + L-aspartate + GTP = N(6)-(1,2-dicarboxyethyl)-AMP + GDP + phosphate + 2 H(+). It functions in the pathway purine metabolism; AMP biosynthesis via de novo pathway; AMP from IMP: step 1/2. Its function is as follows. Plays an important role in the de novo pathway of purine nucleotide biosynthesis. Catalyzes the first committed step in the biosynthesis of AMP from IMP. In Cupriavidus pinatubonensis (strain JMP 134 / LMG 1197) (Cupriavidus necator (strain JMP 134)), this protein is Adenylosuccinate synthetase 1.